The sequence spans 193 residues: Cysteine and glycine-rich protein 1 (193 aa).

Residues Cys10–Cys61 enclose the LIM zinc-binding 1 domain. The Nuclear localization signal signature appears at Lys64–Lys69. Residue Ser81 is modified to Phosphoserine. Residue Lys84 is modified to N6-acetyllysine. Lys91 participates in a covalent cross-link: Glycyl lysine isopeptide (Lys-Gly) (interchain with G-Cter in SUMO2). An N6-acetyllysine mark is found at Lys112, Lys131, Lys137, and Lys161. Positions Cys119 to Cys170 constitute an LIM zinc-binding 2 domain. Phosphoserine is present on Ser192.

Interacts with ASCC1; ASCC2 and TRIP4.

The protein resides in the nucleus. In terms of biological role, could play a role in neuronal development. This Mus musculus (Mouse) protein is Cysteine and glycine-rich protein 1 (Csrp1).